The following is an 89-amino-acid chain: Large ribosomal subunit protein bL31B (89 aa).

This sequence belongs to the bacterial ribosomal protein bL31 family. Type B subfamily. Part of the 50S ribosomal subunit.

The protein is Large ribosomal subunit protein bL31B of Pseudomonas fluorescens (strain ATCC BAA-477 / NRRL B-23932 / Pf-5).